A 98-amino-acid polypeptide reads, in one-letter code: Parvalbumin beta 1 (98 aa).

Ser1 bears the N-acetylserine mark. EF-hand domains follow at residues 32–67 and 67–98; these read KIGL…FSAG and GARA…MIKG. Ca(2+) is bound by residues Asp45, Asp47, Ser49, Phe51, Glu53, Glu56, Asp80, Asp82, Asp84, Lys86, and Glu91.

The protein belongs to the parvalbumin family.

In muscle, parvalbumin is thought to be involved in relaxation after contraction. It binds two calcium ions. This Macruronus magellanicus (Patagonian grenadier) protein is Parvalbumin beta 1.